A 95-amino-acid chain; its full sequence is Aspartyl/glutamyl-tRNA(Asn/Gln) amidotransferase subunit C (95 aa).

It belongs to the GatC family. As to quaternary structure, heterotrimer of A, B and C subunits.

It carries out the reaction L-glutamyl-tRNA(Gln) + L-glutamine + ATP + H2O = L-glutaminyl-tRNA(Gln) + L-glutamate + ADP + phosphate + H(+). The catalysed reaction is L-aspartyl-tRNA(Asn) + L-glutamine + ATP + H2O = L-asparaginyl-tRNA(Asn) + L-glutamate + ADP + phosphate + 2 H(+). Its function is as follows. Allows the formation of correctly charged Asn-tRNA(Asn) or Gln-tRNA(Gln) through the transamidation of misacylated Asp-tRNA(Asn) or Glu-tRNA(Gln) in organisms which lack either or both of asparaginyl-tRNA or glutaminyl-tRNA synthetases. The reaction takes place in the presence of glutamine and ATP through an activated phospho-Asp-tRNA(Asn) or phospho-Glu-tRNA(Gln). The protein is Aspartyl/glutamyl-tRNA(Asn/Gln) amidotransferase subunit C of Chromobacterium violaceum (strain ATCC 12472 / DSM 30191 / JCM 1249 / CCUG 213 / NBRC 12614 / NCIMB 9131 / NCTC 9757 / MK).